We begin with the raw amino-acid sequence, 346 residues long: N-acetyl-gamma-glutamyl-phosphate reductase (346 aa).

Cys150 is an active-site residue.

Belongs to the NAGSA dehydrogenase family. Type 1 subfamily.

The protein localises to the cytoplasm. It catalyses the reaction N-acetyl-L-glutamate 5-semialdehyde + phosphate + NADP(+) = N-acetyl-L-glutamyl 5-phosphate + NADPH + H(+). It functions in the pathway amino-acid biosynthesis; L-arginine biosynthesis; N(2)-acetyl-L-ornithine from L-glutamate: step 3/4. In terms of biological role, catalyzes the NADPH-dependent reduction of N-acetyl-5-glutamyl phosphate to yield N-acetyl-L-glutamate 5-semialdehyde. The protein is N-acetyl-gamma-glutamyl-phosphate reductase of Desulforamulus reducens (strain ATCC BAA-1160 / DSM 100696 / MI-1) (Desulfotomaculum reducens).